We begin with the raw amino-acid sequence, 1215 residues long: RNA-dependent RNA polymerase 1 (1215 aa).

This sequence belongs to the RdRP family. Cid12, hrr1 and rdp1 interact forming the RNA-directed RNA polymerase complex (RDRC). The RDRC complex interacts with the RITS complex via interaction between ago1 and hrr1. Clr4 has a role in mediating this interaction.

Its subcellular location is the cytoplasm. It is found in the nucleus. The protein localises to the chromosome. It localises to the telomere. The protein resides in the centromere. It catalyses the reaction RNA(n) + a ribonucleoside 5'-triphosphate = RNA(n+1) + diphosphate. Has a role in the RNA interference (RNAi) pathway which is important for heterochromatin formation, accurate chromosome segregation, centromere cohesion and telomere function during mitosis and meiosis. Required for both post-transcriptional and transcriptional gene silencing. Required for silencing at the centromeres and for initiation of transcriptionally silent heterochromatin at the mating type locus. Promotes histone H3 'Lys-10' methylation necessary for centromere function. Required for recruitment of swi6 and cohesin to an ectopic dg repeat. A member of the RNA-directed RNA polymerase complex (RDRC) which is involved in the generation of small interfering RNAs (siRNAs) and mediates their association with the RNA-induced transcriptional silencing (RITS) complex. RITS acts as a priming complex for dsRNA synthesis at the site of non-coding centromeric RNA. Its RNA-dependent RNA polymerase activity is critical in siRNA production necessary for heterochromatin formation. This chain is RNA-dependent RNA polymerase 1 (rdp1), found in Schizosaccharomyces pombe (strain 972 / ATCC 24843) (Fission yeast).